We begin with the raw amino-acid sequence, 84 residues long: uncharacterized protein (84 aa).

A helical transmembrane segment spans residues 10–32; it reads AFSLAYYIIIHLLCLSYIYEIIH.

It localises to the membrane. This is an uncharacterized protein from Saccharomyces cerevisiae (strain ATCC 204508 / S288c) (Baker's yeast).